The sequence spans 58 residues: MKTFERLLIKLLFIQAIILLGVQFLFHYQHIEPYVSKVIQYEGVDKMEENNRIETFKH.

This is an uncharacterized protein from Bacillus subtilis (strain 168).